The following is a 160-amino-acid chain: Cytochrome c-type biogenesis protein CcmE (160 aa).

The Cytoplasmic segment spans residues 1–8 (MNPRRKQR). A helical; Signal-anchor for type II membrane protein membrane pass occupies residues 9–29 (LTWVAILVIGVSVATGLMLYA). Over 30-160 (LSQSIDLFYT…PNTVEKGEGQ (131 aa)) the chain is Periplasmic. 2 residues coordinate heme: histidine 130 and tyrosine 134.

This sequence belongs to the CcmE/CycJ family.

Its subcellular location is the cell inner membrane. In terms of biological role, heme chaperone required for the biogenesis of c-type cytochromes. Transiently binds heme delivered by CcmC and transfers the heme to apo-cytochromes in a process facilitated by CcmF and CcmH. The chain is Cytochrome c-type biogenesis protein CcmE from Idiomarina loihiensis (strain ATCC BAA-735 / DSM 15497 / L2-TR).